Reading from the N-terminus, the 168-residue chain is Inorganic pyrophosphatase (168 aa).

The substrate site is built by Lys23, Arg37, and Tyr49. Residues Asp59, Asp64, and Asp96 each contribute to the Mg(2+) site. Tyr133 contributes to the substrate binding site.

Belongs to the PPase family. As to quaternary structure, homohexamer. Requires Mg(2+) as cofactor.

Its subcellular location is the cytoplasm. The catalysed reaction is diphosphate + H2O = 2 phosphate + H(+). Its function is as follows. Catalyzes the hydrolysis of inorganic pyrophosphate (PPi) forming two phosphate ions. This Methanosarcina acetivorans (strain ATCC 35395 / DSM 2834 / JCM 12185 / C2A) protein is Inorganic pyrophosphatase.